A 451-amino-acid polypeptide reads, in one-letter code: Proline--tRNA ligase (451 aa).

This sequence belongs to the class-II aminoacyl-tRNA synthetase family. ProS type 2 subfamily. As to quaternary structure, homodimer.

The protein resides in the cytoplasm. The enzyme catalyses tRNA(Pro) + L-proline + ATP = L-prolyl-tRNA(Pro) + AMP + diphosphate. In terms of biological role, catalyzes the attachment of proline to tRNA(Pro) in a two-step reaction: proline is first activated by ATP to form Pro-AMP and then transferred to the acceptor end of tRNA(Pro). This chain is Proline--tRNA ligase, found in Roseobacter denitrificans (strain ATCC 33942 / OCh 114) (Erythrobacter sp. (strain OCh 114)).